Here is a 405-residue protein sequence, read N- to C-terminus: Homocitrate synthase AksA (405 aa).

In terms of domain architecture, Pyruvate carboxyltransferase spans 23–274 (IEICDVTLRD…IERYDTTKLN (252 aa)).

This sequence belongs to the alpha-IPM synthase/homocitrate synthase family.

It carries out the reaction acetyl-CoA + 2-oxoglutarate + H2O = (2R)-homocitrate + CoA + H(+). The enzyme catalyses 2-oxoadipate + acetyl-CoA + H2O = (R)-dihomocitrate + CoA + H(+). The catalysed reaction is 2-oxoheptanedioate + acetyl-CoA + H2O = (R)-trihomocitrate + CoA + H(+). Its pathway is organic acid metabolism; 2-oxosuberate biosynthesis. Catalyzes the condensation of alpha-ketoglutarate and acetyl-CoA to form (R)-homocitrate. Can also catalyze the condensation of alpha-ketoadipate with acetyl-CoA to form (R)-homo(2)citrate, and the condensation of alpha-ketopimelate with acetyl-CoA to form (R)-homo(3)citrate. These reactions are part of the biosynthesis pathway of coenzyme B and biotin. The chain is Homocitrate synthase AksA (aksA) from Methanosarcina mazei (strain ATCC BAA-159 / DSM 3647 / Goe1 / Go1 / JCM 11833 / OCM 88) (Methanosarcina frisia).